Reading from the N-terminus, the 68-residue chain is Conotoxin Am6.8 (68 aa).

Positions 1–24 are cleaved as a signal peptide; that stretch reads MIRMGFFLTLTVAVLLTSLTCSEA. Residues 25–45 constitute a propeptide that is removed on maturation; it reads VPTDKREMERLFDRILLKDQR. Position 46 is a pyrrolidone carboxylic acid (Gln-46). Disulfide bonds link Cys-47–Cys-55, Cys-50–Cys-60, and Cys-54–Cys-65.

The protein belongs to the conotoxin U superfamily. In terms of tissue distribution, expressed by the venom duct.

It is found in the secreted. Functionally, probable toxin. The chain is Conotoxin Am6.8 from Conus amadis (Amadis cone).